The primary structure comprises 436 residues: Cyclic nucleotide-binding domain-containing protein 1 (436 aa).

The segment covering 89-105 has biased composition (basic and acidic residues); sequence EQRELNEGKEESQHQQP. Residues 89–108 are disordered; it reads EQRELNEGKEESQHQQPDDS. 322 to 436 contacts a nucleoside 3',5'-cyclic phosphate; that stretch reads YYEEWPTLSI…IIEDKDLFVA (115 aa).

The protein is Cyclic nucleotide-binding domain-containing protein 1 (CNBD1) of Homo sapiens (Human).